Consider the following 1473-residue polypeptide: Actin cytoskeleton-regulatory complex protein pan1 (1473 aa).

Disordered stretches follow at residues 1-121 and 134-153; these read MYSS…GLPV and SFRG…AGSK. Positions 24–47 are enriched in low complexity; the sequence is QQPSYGQQTTQQQQQHQTGLAPQP. Residues 62–78 show a composition bias toward polar residues; sequence LQPQPTGFSPGQLQSQM. Positions 79-92 are enriched in low complexity; the sequence is TGFPQLQQQPGFQT. Residues 93–118 are compositionally biased toward polar residues; sequence SAQPPQLTGYSIQSQAPQLQVPSSTG. Positions 166–254 constitute an EH 1 domain; the sequence is DQAKFEQLFK…EKIKNEVSSM (89 aa). The 36-residue stretch at 198–233 folds into the EF-hand 1 domain; that stretch reads LPGSDLSKIWVLSDTTKSGQLFFPEFALAMYLCNIR. Positions 266–366 are disordered; the sequence is QPEMAFPTNA…PTGLMSNPQP (101 aa). Positions 289-298 are enriched in pro residues; sequence PPAPQQPQPQ. Positions 301–339 are enriched in polar residues; it reads THSQLLTQLTAQPTGFHTQPTGIQSTQASFPGQSSSLVP. Residues 344-360 show a composition bias toward low complexity; sequence FPGQSQQQFLQTQPTGL. One can recognise an EH 2 domain in the interval 458-547; the sequence is EKKIYDDLFR…PELVPPSTRN (90 aa). The EF-hand 2 domain occupies 491–526; sequence LDQKDLERIWTLADPHNRGRLNMDEFAVAMHLIYRK. Residues 609 to 645 are disordered; the sequence is NDEAASGYRSSARRRVGNNGRTPSPATSQTSEEELSV. The segment covering 627-638 has biased composition (polar residues); the sequence is NGRTPSPATSQT. Residues 678 to 759 are a coiled coil; the sequence is RRDRREVESL…LFRLKDAKAH (82 aa). Disordered stretches follow at residues 793–837, 891–1265, and 1277–1473; these read AAEL…RDVE, AYVR…ADVQ, and QENA…RVLD. 2 stretches are compositionally biased toward basic and acidic residues: residues 810–837 and 893–915; these read AAAR…RDVE and VRKE…DEAP. The span at 925–934 shows a compositional bias: low complexity; sequence TGSTGSLPGS. 5 stretches are compositionally biased toward basic and acidic residues: residues 935–953, 973–1005, 1054–1097, 1108–1128, and 1135–1147; these read THED…RIAE, RQER…RLAE, AARE…RLRA, KKQE…EQEA, and AELE…ERQL. Residues 963–1163 adopt a coiled-coil conformation; that stretch reads HNNTAETLLQ…LDEESSSDEE (201 aa). Residues 1152–1165 are compositionally biased toward acidic residues; the sequence is EALDEESSSDEEGP. 2 stretches are compositionally biased toward polar residues: residues 1168–1180 and 1208–1218; these read ITPQ…QSQI and TSATSSPTSDR. Positions 1402 to 1434 are enriched in pro residues; the sequence is PDAPPPPPPPPVPHMAPSAPPPGIPPPPAPPAA. Residues 1440–1457 enclose the WH2 domain; that stretch reads NRSALLASIQAGKGLRKV.

It belongs to the PAN1 family. As to quaternary structure, component of the PAN1 actin cytoskeleton-regulatory complex.

The protein resides in the cell membrane. It localises to the endosome membrane. The protein localises to the cytoplasm. Its subcellular location is the cytoskeleton. It is found in the actin patch. In terms of biological role, component of the PAN1 actin cytoskeleton-regulatory complex required for the internalization of endosomes during actin-coupled endocytosis. The complex links the site of endocytosis to the cell membrane-associated actin cytoskeleton. Mediates uptake of external molecules and vacuolar degradation of plasma membrane proteins. Plays a role in the proper organization of the cell membrane-associated actin cytoskeleton and promotes its destabilization. The polypeptide is Actin cytoskeleton-regulatory complex protein pan1 (pan1) (Aspergillus oryzae (strain ATCC 42149 / RIB 40) (Yellow koji mold)).